Consider the following 232-residue polypeptide: Dof zinc finger protein DOF4.3 (232 aa).

The Dof-type zinc finger occupies 25–79; sequence RVCARCDSDNTKFCYYNNYSEFQPRYFCKNCRRYWTHGGALRNVPIGGSSRAKRT. The Zn(2+) site is built by Cys27, Cys30, Cys52, and Cys55.

The protein resides in the nucleus. Transcription factor that binds specifically to a 5'-AA[AG]G-3' consensus core sequence. The chain is Dof zinc finger protein DOF4.3 (DOF4.3) from Arabidopsis thaliana (Mouse-ear cress).